A 147-amino-acid chain; its full sequence is Hemoglobin subunit beta (147 aa).

The 145-residue stretch at 3 to 147 folds into the Globin domain; that stretch reads LLSAEENAHV…VANALAHKYH (145 aa). The residue at position 13 (threonine 13) is a Phosphothreonine. A Phosphoserine modification is found at serine 45. Lysine 60 is subject to N6-acetyllysine. Histidine 64 is a heme b binding site. Lysine 83 carries the N6-acetyllysine modification. Residue histidine 93 coordinates heme b. Cysteine 94 carries the S-nitrosocysteine modification. The residue at position 145 (lysine 145) is an N6-acetyllysine.

This sequence belongs to the globin family. Heterotetramer of two alpha chains and two beta chains. Red blood cells.

In terms of biological role, involved in oxygen transport from the lung to the various peripheral tissues. The protein is Hemoglobin subunit beta (HBB) of Eulemur fulvus fulvus (Brown lemur).